Here is a 428-residue protein sequence, read N- to C-terminus: Spliceosome RNA helicase Ddx39b (428 aa).

The span at 1-19 (MAENDVDNELLDYEDDEVE) shows a compositional bias: acidic residues. Positions 1–31 (MAENDVDNELLDYEDDEVETAAGADGTEAPA) are disordered. Residue Ala2 is modified to N-acetylalanine. N6-acetyllysine; alternate is present on Lys36. Lys36 is covalently cross-linked (Glycyl lysine isopeptide (Lys-Gly) (interchain with G-Cter in SUMO2); alternate). Residues Ser38 and Ser41 each carry the phosphoserine modification. A Q motif motif is present at residues 45–73 (SGFRDFLLKPELLRAIVDCGFEHPSEVQH). The region spanning 76 to 249 (IPQAILGMDV…RKFMQDPMEI (174 aa)) is the Helicase ATP-binding domain. 89–96 (AKSGMGKT) serves as a coordination point for ATP. A Phosphothreonine modification is found at Thr172. The DECD box motif lies at 196–199 (DECD). A Helicase C-terminal domain is found at 261–422 (GLQQYYVKLK…ELPDEIDISS (162 aa)).

The protein belongs to the DEAD box helicase family. DECD subfamily. As to quaternary structure, homodimer, and heterodimer with DDX39A. DDX39B interacts with the THO subcomplex to form the THO-DDX39B complex which multimerizes into a 28-subunit tetrameric assembly. Component of the transcription/export (TREX) complex at least composed of ALYREF/THOC4, DDX39B, SARNP/CIP29, CHTOP and the THO subcomplex; in the complex interacts with THOC2. THOC1-THOC2-THOC3-DDX39B subcomplex is sufficient for the interaction with export factor NXF1-NXT1. TREX seems to have a dynamic structure involving ATP-dependent remodeling. Within the TREX complex bridges ALYREF/THOC4 and the THO subcomplex, and, in a ATP-dependent manner, ALYREF/THOC4 and SARNP/CIP29. Component of the spliceosome. Interacts directly with U2AF2. Interacts with RBM8A, RNPS1 and SRRM1, FYTTD1/UIF, THOC1, MX1 and POLDIP3. Interacts with LUZP4. Interacts with SARNP/CIP29 (via the C-terminal domain); the interaction is direct and facilitates RNA binding of DDX39B.

The protein localises to the nucleus. Its subcellular location is the nucleus speckle. It is found in the cytoplasm. The catalysed reaction is ATP + H2O = ADP + phosphate + H(+). Functionally, involved in nuclear export of spliced and unspliced mRNA. Component of the TREX complex which is thought to couple mRNA transcription, processing and nuclear export, and specifically associates with spliced mRNA and not with unspliced pre-mRNA. The TREX complex is recruited to spliced mRNAs by a transcription-independent mechanism, binds to mRNA upstream of the exon-junction complex (EJC) and is recruited in a splicing- and cap-dependent manner to a region near the 5' end of the mRNA where it functions in mRNA export to the cytoplasm via the TAP/NXF1 pathway. The THOC1-THOC2-THOC3 core complex alone is sufficient to promote ATPase activity of DDX39B; in the complex THOC2 is the only component that directly interacts with DDX39B. Associates with SARNP/CIP29, which facilitates RNA binding of DDX39B and likely plays a role in mRNA export. May undergo several rounds of ATP hydrolysis during assembly of TREX to drive subsequent loading of components such as ALYREF/THOC4 and CHTOP onto mRNA. Also associates with pre-mRNA independent of ALYREF/THOC4. Involved in the nuclear export of intronless mRNA; the ATP-bound form is proposed to recruit export adapter ALYREF/THOC4 to intronless mRNA; its ATPase activity is cooperatively stimulated by RNA and ALYREF/THOC4 and ATP hydrolysis is thought to trigger the dissociation from RNA to allow the association of ALYREF/THOC4 and the NXF1-NXT1 heterodimer. Involved in transcription elongation and genome stability. In terms of biological role, splice factor that is required for the first ATP-dependent step in spliceosome assembly and for the interaction of U2 snRNP with the branchpoint. Has both RNA-stimulated ATP binding/hydrolysis activity and ATP-dependent RNA unwinding activity. Even with the stimulation of RNA, the ATPase activity is weak. Can only hydrolyze ATP but not other NTPs. The RNA stimulation of ATPase activity does not have a strong preference for the sequence and length of the RNA. However, ssRNA stimulates the ATPase activity much more strongly than dsRNA. Can unwind 5' or 3' overhangs or blunt end RNA duplexes in vitro. The ATPase and helicase activities are not influenced by U2AF2; the effect of ALYREF/THOC4 is reported conflictingly. This chain is Spliceosome RNA helicase Ddx39b (Ddx39b), found in Mus musculus (Mouse).